Here is a 487-residue protein sequence, read N- to C-terminus: Betaine aldehyde dehydrogenase (487 aa).

K(+) contacts are provided by I27 and D93. G149–W151 is an NAD(+) binding site. The active-site Charge relay system is K161. Residues K175–E178 and S228–T231 contribute to the NAD(+) site. The active-site Proton acceptor is E249. The NAD(+) site is built by G251, C283, and E384. C283 (nucleophile) is an active-site residue. Residue C283 is modified to Cysteine sulfenic acid (-SOH). Residues K454 and G457 each coordinate K(+). Residue E461 is the Charge relay system of the active site.

The protein belongs to the aldehyde dehydrogenase family. Dimer of dimers. K(+) is required as a cofactor.

It catalyses the reaction betaine aldehyde + NAD(+) + H2O = glycine betaine + NADH + 2 H(+). It participates in amine and polyamine biosynthesis; betaine biosynthesis via choline pathway; betaine from betaine aldehyde: step 1/1. In terms of biological role, involved in the biosynthesis of the osmoprotectant glycine betaine. Catalyzes the irreversible oxidation of betaine aldehyde to the corresponding acid. This chain is Betaine aldehyde dehydrogenase, found in Mesorhizobium japonicum (strain LMG 29417 / CECT 9101 / MAFF 303099) (Mesorhizobium loti (strain MAFF 303099)).